Reading from the N-terminus, the 720-residue chain is Protein unc-112 (720 aa).

Disordered regions lie at residues 145–170 and 210–236; these read DLRRGTSDADNMNGPLSMRPGEESVG and MGTLPRHGTLPRGVSPSPGAYNDTMRR. The FERM domain occupies 288 to 614; sequence WLDSSRSLME…ALPEHGIHYF (327 aa). One can recognise a PH domain in the interval 402 to 507; the sequence is VPELADYLKY…WMAACRLASR (106 aa).

The protein belongs to the kindlin family. Interacts with pat-4/ILK. Probably forms a complex with pat-4 and pat-6. Component of an integrin containing attachment complex, composed of at least pat-2, pat-3, pat-4, pat-6, unc-52, unc-97 and unc-112. In terms of tissue distribution, mainly expressed in muscle cells in both embryos and adults.

It localises to the cell membrane. It is found in the cytoplasm. Its subcellular location is the myofibril. The protein resides in the sarcomere. The protein localises to the m line. Its function is as follows. Component of an integrin containing attachment complex, which is required for muscle development and maintenance. Probable regulator of cell-extracellular matrix adhesion. Required during initial muscle assembly to form dense bodies and M-lines. The sequence is that of Protein unc-112 from Caenorhabditis elegans.